Reading from the N-terminus, the 147-residue chain is Protein phosphatase 1 regulatory subunit 14A (147 aa).

The span at 1–11 (MAAQRLGKRVL) shows a compositional bias: basic residues. The disordered stretch occupies residues 1–37 (MAAQRLGKRVLSKLQSPSRARGPGGSPSGLQKRHARV). A Phosphoserine modification is found at S26. The tract at residues 35-120 (ARVTVKYDRR…LLAKLRGLHK (86 aa)) is inhibitory. Position 38 is a phosphothreonine (T38). Residues 118–147 (LHKQPGFPQPSPSDDPSLSPRQDPAHTAPP) form a disordered region. Residues S128, S134, and S136 each carry the phosphoserine modification.

Belongs to the PP1 inhibitor family.

It localises to the cytoplasm. Its function is as follows. Inhibitor of PPP1CA. Has over 1000-fold higher inhibitory activity when phosphorylated, creating a molecular switch for regulating the phosphorylation status of PPP1CA substrates and smooth muscle contraction. The chain is Protein phosphatase 1 regulatory subunit 14A (Ppp1r14a) from Rattus norvegicus (Rat).